The chain runs to 205 residues: Molybdenum cofactor guanylyltransferase (205 aa).

Residues 14-16 (LAG), Lys-27, Asp-77, and Asp-107 each bind GTP. Asp-107 provides a ligand contact to Mg(2+).

Belongs to the MobA family. As to quaternary structure, monomer. The cofactor is Mg(2+).

Its subcellular location is the cytoplasm. The catalysed reaction is Mo-molybdopterin + GTP + H(+) = Mo-molybdopterin guanine dinucleotide + diphosphate. Its function is as follows. Transfers a GMP moiety from GTP to Mo-molybdopterin (Mo-MPT) cofactor (Moco or molybdenum cofactor) to form Mo-molybdopterin guanine dinucleotide (Mo-MGD) cofactor. The chain is Molybdenum cofactor guanylyltransferase from Burkholderia cenocepacia (strain HI2424).